The sequence spans 407 residues: Arginine deiminase (407 aa).

The Amidino-cysteine intermediate role is filled by Cys397.

The protein belongs to the arginine deiminase family.

It is found in the cytoplasm. It carries out the reaction L-arginine + H2O = L-citrulline + NH4(+). It participates in amino-acid degradation; L-arginine degradation via ADI pathway; carbamoyl phosphate from L-arginine: step 1/2. The protein is Arginine deiminase of Vibrio parahaemolyticus serotype O3:K6 (strain RIMD 2210633).